The primary structure comprises 165 residues: Dihydrofolate reductase type A13 (165 aa).

The DHFR domain occupies 7–162 (RIYLVAAMGA…ITYTHSVYAR (156 aa)).

It belongs to the dihydrofolate reductase family. Homodimer.

It carries out the reaction (6S)-5,6,7,8-tetrahydrofolate + NADP(+) = 7,8-dihydrofolate + NADPH + H(+). Its pathway is cofactor biosynthesis; tetrahydrofolate biosynthesis; 5,6,7,8-tetrahydrofolate from 7,8-dihydrofolate: step 1/1. Key enzyme in folate metabolism. Catalyzes an essential reaction for de novo glycine and purine synthesis, and for DNA precursor synthesis. This chain is Dihydrofolate reductase type A13 (dfrA13), found in Escherichia coli.